Reading from the N-terminus, the 20-residue chain is Phospholipase A2 II-5b (20 aa).

This sequence belongs to the phospholipase A2 family. Group I subfamily. Ca(2+) is required as a cofactor. Expressed by the venom gland.

It is found in the secreted. It carries out the reaction a 1,2-diacyl-sn-glycero-3-phosphocholine + H2O = a 1-acyl-sn-glycero-3-phosphocholine + a fatty acid + H(+). Snake venom phospholipase A2 (PLA2) that exhibits weak enzymatic activity. PLA2 catalyzes the calcium-dependent hydrolysis of the 2-acyl groups in 3-sn-phosphoglycerides. The protein is Phospholipase A2 II-5b of Notechis scutatus scutatus (Mainland tiger snake).